Reading from the N-terminus, the 198-residue chain is Holliday junction branch migration complex subunit RuvA (198 aa).

The segment at 1 to 63 (MYDYIKGQLT…EDAQLLFGFH (63 aa)) is domain I. Residues 64–142 (SEEEKDVFLK…EAPKEESSKP (79 aa)) are domain II. The tract at residues 143–147 (PKAKQ) is flexible linker. The tract at residues 148–198 (QGNEQLDEAVEALLALGYKATELKKIRAFFEGTSETAEQYIKSALKMLMKG) is domain III.

Belongs to the RuvA family. In terms of assembly, homotetramer. Forms an RuvA(8)-RuvB(12)-Holliday junction (HJ) complex. HJ DNA is sandwiched between 2 RuvA tetramers; dsDNA enters through RuvA and exits via RuvB. An RuvB hexamer assembles on each DNA strand where it exits the tetramer. Each RuvB hexamer is contacted by two RuvA subunits (via domain III) on 2 adjacent RuvB subunits; this complex drives branch migration. In the full resolvosome a probable DNA-RuvA(4)-RuvB(12)-RuvC(2) complex forms which resolves the HJ.

It is found in the cytoplasm. In terms of biological role, the RuvA-RuvB-RuvC complex processes Holliday junction (HJ) DNA during genetic recombination and DNA repair, while the RuvA-RuvB complex plays an important role in the rescue of blocked DNA replication forks via replication fork reversal (RFR). RuvA specifically binds to HJ cruciform DNA, conferring on it an open structure. The RuvB hexamer acts as an ATP-dependent pump, pulling dsDNA into and through the RuvAB complex. HJ branch migration allows RuvC to scan DNA until it finds its consensus sequence, where it cleaves and resolves the cruciform DNA. The chain is Holliday junction branch migration complex subunit RuvA from Streptococcus equi subsp. equi (strain 4047).